The sequence spans 151 residues: Putative pre-16S rRNA nuclease (151 aa).

The protein belongs to the YqgF nuclease family.

It is found in the cytoplasm. Could be a nuclease involved in processing of the 5'-end of pre-16S rRNA. This chain is Putative pre-16S rRNA nuclease, found in Neisseria meningitidis serogroup C (strain 053442).